The following is a 651-amino-acid chain: Acetyl-coenzyme A synthetase (651 aa).

Residues 193-196 (RRGK) and threonine 312 each bind CoA. ATP is bound by residues 388–390 (GEP), 412–417 (DTWWQT), aspartate 501, and arginine 516. Position 524 (serine 524) interacts with CoA. Mg(2+)-binding residues include valine 538, histidine 540, and valine 543. An N6-acetyllysine modification is found at lysine 610.

It belongs to the ATP-dependent AMP-binding enzyme family. The cofactor is Mg(2+). Acetylated. Deacetylation by the SIR2-homolog deacetylase activates the enzyme.

The enzyme catalyses acetate + ATP + CoA = acetyl-CoA + AMP + diphosphate. Functionally, catalyzes the conversion of acetate into acetyl-CoA (AcCoA), an essential intermediate at the junction of anabolic and catabolic pathways. AcsA undergoes a two-step reaction. In the first half reaction, AcsA combines acetate with ATP to form acetyl-adenylate (AcAMP) intermediate. In the second half reaction, it can then transfer the acetyl group from AcAMP to the sulfhydryl group of CoA, forming the product AcCoA. The chain is Acetyl-coenzyme A synthetase from Streptomyces coelicolor (strain ATCC BAA-471 / A3(2) / M145).